We begin with the raw amino-acid sequence, 404 residues long: Propionate kinase (404 aa).

This sequence belongs to the acetokinase family. PduW subfamily.

It is found in the cytoplasm. The catalysed reaction is propanoate + ATP = propanoyl phosphate + ADP. It participates in polyol metabolism; 1,2-propanediol degradation. In terms of biological role, works with phosphate acetyltransferase (pta) to capture exogenous propionate and regenerate propionyl-CoA during degradation of 1,2-propanediol (1,2-PD). Functionally, expression of a cosmid containing the full 21-gene pdu operon in E.coli allows E.coli to grow on 1,2-propanediol (1,2-PD) with the appearance of bacterial microcompartments (BMC) in its cytoplasm. The polypeptide is Propionate kinase (Citrobacter freundii).